Reading from the N-terminus, the 453-residue chain is MSPQTETKASVGFKAGVKEYKLTYYTPEYQTKDTDILAAFRVTPQPGVPPEERGAAVAAESSTGTWTTVWTDGLTSLDRYKGRCYHIEPVAGEENQYIAYVAYPLDLFEEGSVTNMFTSIVGNVFGFKALRALRLEDLRIPIAYVKTFQGPPHGIQVERDKLNKYGRPLLGCTIKPKLGLSAKNYGRAVYECLRGGLDFTKDDENVNSQPFMRWRDRFLFCAEALFKAQAETGEIKGHYLNATAGTCEEMMKRAVFARELGTPIVMHDYLTGGFTANTTLAHYCRDNGLLLHIHRAMHAVIDRQKNHGMHFRVLAKALRMSGGDHIHAGTVVGKLEGERDITLGFVDLLRDDYIEKDRSRGIYFTQDWVSLPGVIPVASRGIHVWHMPALTEIFGDDSVLQFGGGTLGHPWGNAPGAVANRVALEACVKARNEGRDLAAEGTLVIREARKWSP.

Positions 1 to 2 are excised as a propeptide; that stretch reads MS. Pro-3 bears the N-acetylproline mark. Lys-14 bears the N6,N6,N6-trimethyllysine mark. Substrate is bound by residues Asn-123 and Thr-173. Lys-175 serves as the catalytic Proton acceptor. Residue Lys-177 coordinates substrate. Mg(2+)-binding residues include Lys-201, Asp-203, and Glu-204. Lys-201 carries the post-translational modification N6-carboxylysine. His-294 acts as the Proton acceptor in catalysis. Residues Arg-295, His-327, and Ser-379 each contribute to the substrate site.

This sequence belongs to the RuBisCO large chain family. Type I subfamily. As to quaternary structure, heterohexadecamer of 8 large chains and 8 small chains; disulfide-linked. The disulfide link is formed within the large subunit homodimers. The cofactor is Mg(2+). In terms of processing, the disulfide bond which can form in the large chain dimeric partners within the hexadecamer appears to be associated with oxidative stress and protein turnover.

It localises to the plastid. It is found in the chloroplast. It carries out the reaction 2 (2R)-3-phosphoglycerate + 2 H(+) = D-ribulose 1,5-bisphosphate + CO2 + H2O. The catalysed reaction is D-ribulose 1,5-bisphosphate + O2 = 2-phosphoglycolate + (2R)-3-phosphoglycerate + 2 H(+). In terms of biological role, ruBisCO catalyzes two reactions: the carboxylation of D-ribulose 1,5-bisphosphate, the primary event in carbon dioxide fixation, as well as the oxidative fragmentation of the pentose substrate in the photorespiration process. Both reactions occur simultaneously and in competition at the same active site. The protein is Ribulose bisphosphate carboxylase large chain of Hydnophytum formicarum (Ant plant).